The following is a 232-amino-acid chain: Phosphatidylserine decarboxylase proenzyme (232 aa).

Catalysis depends on Ser201, which acts as the Schiff-base intermediate with substrate; via pyruvic acid. Ser201 is modified (pyruvic acid (Ser); by autocatalysis).

This sequence belongs to the phosphatidylserine decarboxylase family. PSD-A subfamily. As to quaternary structure, heterodimer of a large membrane-associated beta subunit and a small pyruvoyl-containing alpha subunit. The cofactor is pyruvate. In terms of processing, is synthesized initially as an inactive proenzyme. Formation of the active enzyme involves a self-maturation process in which the active site pyruvoyl group is generated from an internal serine residue via an autocatalytic post-translational modification. Two non-identical subunits are generated from the proenzyme in this reaction, and the pyruvate is formed at the N-terminus of the alpha chain, which is derived from the carboxyl end of the proenzyme. The post-translation cleavage follows an unusual pathway, termed non-hydrolytic serinolysis, in which the side chain hydroxyl group of the serine supplies its oxygen atom to form the C-terminus of the beta chain, while the remainder of the serine residue undergoes an oxidative deamination to produce ammonia and the pyruvoyl prosthetic group on the alpha chain.

The protein resides in the cell membrane. It catalyses the reaction a 1,2-diacyl-sn-glycero-3-phospho-L-serine + H(+) = a 1,2-diacyl-sn-glycero-3-phosphoethanolamine + CO2. It functions in the pathway phospholipid metabolism; phosphatidylethanolamine biosynthesis; phosphatidylethanolamine from CDP-diacylglycerol: step 2/2. Functionally, catalyzes the formation of phosphatidylethanolamine (PtdEtn) from phosphatidylserine (PtdSer). The protein is Phosphatidylserine decarboxylase proenzyme of Mycolicibacterium gilvum (strain PYR-GCK) (Mycobacterium gilvum (strain PYR-GCK)).